The following is a 104-amino-acid chain: COX assembly mitochondrial protein 1 (104 aa).

The CHCH domain occupies 10-52 (QKQCADLIRALEECHKSFGKFFGECNTIKYELKACLTKDRNDK). 2 consecutive short sequence motifs (cx9C motif) follow at residues 13 to 23 (CADLIRALEEC) and 34 to 44 (CNTIKYELKAC). Intrachain disulfides connect cysteine 13-cysteine 44 and cysteine 23-cysteine 34.

Belongs to the CMC family.

Its subcellular location is the mitochondrion inner membrane. In terms of biological role, required for mitochondrial cytochrome c oxidase (COX) assembly and respiration. In Schizosaccharomyces pombe (strain 972 / ATCC 24843) (Fission yeast), this protein is COX assembly mitochondrial protein 1 (cmc1).